We begin with the raw amino-acid sequence, 138 residues long: Large ribosomal subunit protein uL16 (138 aa).

Residues 1-15 (MLSPKKVKYRKKQRG) are compositionally biased toward basic residues. Residues 1 to 21 (MLSPKKVKYRKKQRGRLSGEA) form a disordered region.

This sequence belongs to the universal ribosomal protein uL16 family. As to quaternary structure, part of the 50S ribosomal subunit.

In terms of biological role, binds 23S rRNA and is also seen to make contacts with the A and possibly P site tRNAs. This Borreliella burgdorferi (strain ATCC 35210 / DSM 4680 / CIP 102532 / B31) (Borrelia burgdorferi) protein is Large ribosomal subunit protein uL16.